The sequence spans 535 residues: Sucrose transport protein SUT5 (535 aa).

Over 1-53 (MEEGRRGDREAKSAAGWTALSTTKTTLEEKRRLQANGSVGGDAGTSGFRRIVR) the chain is Cytoplasmic. Residues 54–74 (LFFACMVAGGIQYGWALQLSL) form a helical membrane-spanning segment. Residues 75–87 (LSPYSQTLGISHS) lie on the Extracellular side of the membrane. Residues 88 to 108 (YVSLTWICGPIAGFVVQPIVG) form a helical membrane-spanning segment. Topologically, residues 109-122 (YYSDRCTMKMGRRR) are cytoplasmic. The helical transmembrane segment at 123-143 (PFILVGCLIICISVMIIGFSA) threads the bilayer. Residues 144 to 163 (DIGRHLGDTKEHCSTYTGPR) are Extracellular-facing. The helical transmembrane segment at 164 to 184 (WSAAMVYIVGFWFLDFANNTV) threads the bilayer. Residues 185–203 (QGPARAMMADLSAGHHGPN) are Cytoplasmic-facing. Residues 204 to 224 (VGQSIFSLWMAIGSVLGYLSG) traverse the membrane as a helical segment. The Extracellular segment spans residues 225 to 249 (ANGKWHEWFPWLKTAACCDACANLK). The helical transmembrane segment at 250 to 270 (GAFFTAVLLIVVSMTVTMYLA) threads the bilayer. At 271–302 (DEMPLDKQDVDTSGGGGCAVFVDLFKSLRNLP) the chain is on the cytoplasmic side. The helical transmembrane segment at 303 to 323 (PAMFKVLAVTAVTWLSWFPFI) threads the bilayer. Residues 324–354 (QYNTDWMGREIYHGEPQGTAAKADVYDAGVR) lie on the Extracellular side of the membrane. A helical transmembrane segment spans residues 355–375 (EGAMGLLFCSVALGVTSFVIP). Residues 376-384 (KLCRRLTSK) are Cytoplasmic-facing. A helical transmembrane segment spans residues 385–405 (VVWSISNFLVFALMAVMVAVG). Residues 406-429 (MVSMRGYRPSLAAGLTGPDPTLKA) are Extracellular-facing. Residues 430-450 (VALVVFALIGIPQAVLFSVPW) traverse the membrane as a helical segment. The Cytoplasmic segment spans residues 451–465 (AVASEVTAEEGGGQG). The helical transmembrane segment at 466-486 (LAIGVLNIAIVVPQLVIALTA) threads the bilayer. Topologically, residues 487–498 (GPIDGAFNKGNT) are extracellular. Residues 499–519 (PAFGIGGAFAFICGVLALIWL) traverse the membrane as a helical segment. The Cytoplasmic portion of the chain corresponds to 520-535 (PKTRGVSNAAVVAGGH).

It belongs to the glycoside-pentoside-hexuronide (GPH) cation symporter transporter (TC 2.A.2.4) family. In terms of assembly, homodimer.

The protein resides in the cell membrane. The protein operates within glycan biosynthesis; sucrose metabolism. Its function is as follows. Responsible for the transport of sucrose into the cell, with the concomitant uptake of protons (symport system). May also transport other glucosides. The chain is Sucrose transport protein SUT5 (SUT5) from Oryza sativa subsp. indica (Rice).